A 296-amino-acid chain; its full sequence is NADPH-dependent 1-acyldihydroxyacetone phosphate reductase (296 aa).

An NADP(+)-binding site is contributed by I9. Residues 11 to 15 (GCSEG) carry the GXSXG motif. Residues T35, R41, D56, N84, K117, Y148, K152, V181, and T183 each coordinate NADP(+). Y148 (proton donor) is an active-site residue. The active-site Lowers pKa of active site Tyr is the K152.

It belongs to the short-chain dehydrogenases/reductases (SDR) family.

Its subcellular location is the lipid droplet. The protein localises to the cytoplasm. It is found in the vacuole. The protein resides in the endoplasmic reticulum. It localises to the golgi apparatus. Its subcellular location is the mitochondrion outer membrane. It catalyses the reaction 1-hexadecanoyl-sn-glycero-3-phosphate + NADP(+) = 1-hexadecanoylglycerone 3-phosphate + NADPH + H(+). The enzyme catalyses a 1-acylglycerone 3-phosphate + NADPH + H(+) = a 1-acyl-sn-glycero-3-phosphate + NADP(+). It carries out the reaction a triacylglycerol + H2O = a diacylglycerol + a fatty acid + H(+). Can convert acyl and alkyl dihydroxyacetone-phosphate (DHAP) into glycerolipids and ether lipids, respectively. Required for the biosynthesis of phosphatidic acid via the DHAP pathway, where it reduces 1-acyl DHAP to lysophosphatidic acid (LPA). Also has triacylglycerol (TAG) lipase activity. Involved in the mobilization of the non-polar storage lipids triacylglycerols (TAGs) from lipid particles by hydrolysis of TAGs. Lipolysis of TAG by AYR1 is essential for starvation-induced autophagy. Forms an NADPH-regulated cation-selective channel in the mitochondrial outer membrane. This is NADPH-dependent 1-acyldihydroxyacetone phosphate reductase (ayr1) from Schizosaccharomyces pombe (strain 972 / ATCC 24843) (Fission yeast).